The sequence spans 107 residues: U1-lycotoxin-Ls1b (107 aa).

Residues 1–20 form the signal peptide; sequence MMKVLVVVALLVTLISYSSS. Residues 21–41 constitute a propeptide that is removed on maturation; it reads EGIDDLEADELLSLMADEQTR. 4 disulfides stabilise this stretch: Cys44–Cys59, Cys51–Cys68, Cys58–Cys86, and Cys70–Cys84.

Belongs to the neurotoxin 19 (CSTX) family. 04 (U1-Lctx) subfamily. Expressed by the venom gland.

The protein resides in the secreted. This chain is U1-lycotoxin-Ls1b, found in Lycosa singoriensis (Wolf spider).